A 124-amino-acid chain; its full sequence is Ribonuclease pancreatic (124 aa).

Basic and acidic residues predominate over residues 1-13; it reads KESAAAKFERQHM. Residues 1–24 form a disordered region; sequence KESAAAKFERQHMDSSTSSASSSN. 2 residues coordinate substrate: Lys-7 and Arg-10. His-12 acts as the Proton acceptor in catalysis. 4 disulfide bridges follow: Cys-26-Cys-84, Cys-40-Cys-95, Cys-58-Cys-110, and Cys-65-Cys-72. A glycan (N-linked (GlcNAc...) asparagine; partial) is linked at Asn-34. Residues 41–45, Lys-66, and Arg-85 each bind substrate; that span reads KPVNT. His-119 acts as the Proton donor in catalysis.

The protein belongs to the pancreatic ribonuclease family. As to quaternary structure, monomer. Interacts with and forms tight 1:1 complexes with RNH1. Dimerization of two such complexes may occur. Interaction with RNH1 inhibits this protein. In terms of tissue distribution, pancreas.

It localises to the secreted. The catalysed reaction is an [RNA] containing cytidine + H2O = an [RNA]-3'-cytidine-3'-phosphate + a 5'-hydroxy-ribonucleotide-3'-[RNA].. It catalyses the reaction an [RNA] containing uridine + H2O = an [RNA]-3'-uridine-3'-phosphate + a 5'-hydroxy-ribonucleotide-3'-[RNA].. Its function is as follows. Endonuclease that catalyzes the cleavage of RNA on the 3' side of pyrimidine nucleotides. Acts on single-stranded and double-stranded RNA. The sequence is that of Ribonuclease pancreatic (RNASE1) from Ovis aries (Sheep).